The chain runs to 882 residues: Cadherin-1 (882 aa).

Residues 1-22 (MGPWSRSLSALLLLLQVSSWLC) form the signal peptide. Positions 23–154 (QEPEPCHPGF…SSSGLRRRKR (132 aa)) are excised as a propeptide. The N-linked (GlcNAc...) asparagine glycan is linked to Asn-144. Cadherin domains are found at residues 155 to 262 (DWVI…KPEF), 263 to 375 (TQEV…PPVF), 376 to 486 (NPTT…APIF), 487 to 593 (VPPE…DNAP), and 594 to 697 (IPEP…VCKK). Residues 155–709 (DWVIPPISCP…PIEAGLQIPA (555 aa)) lie on the Extracellular side of the membrane. Position 257 (Asp-257) interacts with Ca(2+). Ser-280 is a glycosylation site (O-linked (Man...) serine). O-linked (Man...) threonine glycosylation occurs at Thr-285. Asp-288 lines the Ca(2+) pocket. O-linked (Man...) threonine glycans are attached at residues Thr-358, Thr-470, Thr-472, and Thr-509. An N-linked (GlcNAc...) asparagine glycan is attached at Asn-558. O-linked (Man...) threonine glycosylation is found at Thr-576, Thr-578, and Thr-580. A glycan (N-linked (GlcNAc...) asparagine) is linked at Asn-637. Residues 710–730 (ILGILGGILALLILILLLLLF) form a helical membrane-spanning segment. The Cytoplasmic portion of the chain corresponds to 731-882 (LRRRAVVKEP…ADMYGGGEDD (152 aa)). A disordered region spans residues 747 to 767 (DTRDNVYYYDEEGGGEEDQDF). Tyr-753, Tyr-754, and Tyr-755 each carry phosphotyrosine; by SRC. The span at 755–767 (YDEEGGGEEDQDF) shows a compositional bias: acidic residues. The tract at residues 758–769 (EGGGEEDQDFDL) is required for binding CTNND1 and PSEN1. Ser-770, Ser-793, Ser-838, Ser-840, and Ser-846 each carry phosphoserine. The tract at residues 811 to 882 (IDENLKAADT…ADMYGGGEDD (72 aa)) is required for binding alpha, beta and gamma catenins.

In terms of assembly, homodimer; disulfide-linked. Component of an E-cadherin/ catenin adhesion complex composed of at least E-cadherin/CDH1, beta-catenin/CTNNB1 or gamma-catenin/JUP, and potentially alpha-catenin/CTNNA1; the complex is located to adherens junctions. Found in a complex composed of CDH1, RAP1A and PKP3; PKP3 acts as a scaffold protein within the complex, the complex is required for CDH1 localization to mature desmosome cell junctions. Interacts with the TRPV4 and CTNNB1 complex. Interacts with CTNND1. The stable association of CTNNA1 is controversial as CTNNA1 was shown not to bind to F-actin when assembled in the complex. Alternatively, the CTNNA1-containing complex may be linked to F-actin by other proteins such as LIMA1. Interaction with PSEN1, cleaves CDH1 resulting in the disassociation of cadherin-based adherens junctions (CAJs). Interacts with AJAP1 and DLGAP5. Interacts with TBC1D2. Interacts with LIMA1. Interacts with CAV1. Interacts with PIP5K1C. Interacts with RAB8B. Interacts with DDR1; this stabilizes CDH1 at the cell surface and inhibits its internalization. Interacts with RAPGEF2. Interacts with KLRG1. Forms a ternary complex composed of ADAM10, CADH1 and EPHA4; within the complex, CADH1 is cleaved by ADAM10 which disrupts adherens junctions. Interacts with SPEF1. Interacts with CTNNB1 and PKP2. Interacts with AMOTL2; the interaction may facilitate binding of radial actin fibers to cell junction complexes. Interacts with DSG3; the interaction is required for CDH1 localization to developing adherens junctions. In terms of processing, during apoptosis or with calcium influx, cleaved by a membrane-bound metalloproteinase (ADAM10), PS1/gamma-secretase and caspase-3. Processing by the metalloproteinase, induced by calcium influx, causes disruption of cell-cell adhesion and the subsequent release of beta-catenin into the cytoplasm. The residual membrane-tethered cleavage product is rapidly degraded via an intracellular proteolytic pathway. Cleavage by caspase-3 releases the cytoplasmic tail resulting in disintegration of the actin microfilament system. The gamma-secretase-mediated cleavage promotes disassembly of adherens junctions. During development of the cochlear organ of Corti, cleavage by ADAM10 at adherens junctions promotes pillar cell separation. Post-translationally, N-glycosylation at Asn-637 is essential for expression, folding and trafficking. Addition of bisecting N-acetylglucosamine by MGAT3 modulates its cell membrane location. Ubiquitinated by a SCF complex containing SKP2, which requires prior phosphorylation by CK1/CSNK1A1. Ubiquitinated by CBLL1/HAKAI, requires prior phosphorylation at Tyr-754. In terms of processing, O-glycosylated. O-manosylated by TMTC1, TMTC2, TMTC3 or TMTC4. Thr-285 and Thr-509 are O-mannosylated by TMTC2 or TMTC4 but not TMTC1 or TMTC3.

The protein resides in the cell junction. The protein localises to the adherens junction. It is found in the cell membrane. It localises to the endosome. Its subcellular location is the golgi apparatus. The protein resides in the trans-Golgi network. The protein localises to the cytoplasm. It is found in the desmosome. Cadherins are calcium-dependent cell adhesion proteins. They preferentially interact with themselves in a homophilic manner in connecting cells; cadherins may thus contribute to the sorting of heterogeneous cell types. CDH1 is involved in mechanisms regulating cell-cell adhesions, mobility and proliferation of epithelial cells. Promotes organization of radial actin fiber structure and cellular response to contractile forces, via its interaction with AMOTL2 which facilitates anchoring of radial actin fibers to CDH1 junction complexes at the cell membrane. Plays a role in the early stages of desmosome cell-cell junction formation via facilitating the recruitment of DSG2 and DSP to desmosome plaques. Has a potent invasive suppressor role. It is a ligand for integrin alpha-E/beta-7. Functionally, E-Cad/CTF2 promotes non-amyloidogenic degradation of Abeta precursors. Has a strong inhibitory effect on APP C99 and C83 production. This Pongo abelii (Sumatran orangutan) protein is Cadherin-1 (CDH1).